A 227-amino-acid chain; its full sequence is 4-nitrobenzoate reductase (227 aa).

Arg15 to Arg19 contributes to the FMN binding site. Ser45, Tyr102, and Ile107 together coordinate NAD(+). Arg213 lines the FMN pocket.

This sequence belongs to the nitroreductase family. FMN is required as a cofactor.

The catalysed reaction is 4-nitrobenzoate + 2 NADH + 2 H(+) = 4-hydroxylaminobenzoate + 2 NAD(+) + H2O. In terms of biological role, nitroreductase involved in the degradation of nitroaromatic compounds. Catalyzes the conversion of 4-nitrobenzoate to 4-hydroxylaminobenzoate. Required for the catabolism of 4-nitrotoluene. In Pseudomonas putida (Arthrobacter siderocapsulatus), this protein is 4-nitrobenzoate reductase.